The primary structure comprises 591 residues: Probable translation initiation factor IF-2 (591 aa).

The tr-type G domain maps to 6 to 220 (IRTPIVCVMG…IMIGLAQRYM (215 aa)). The tract at residues 15–22 (GHVDHGKT) is G1. 15–22 (GHVDHGKT) contributes to the GTP binding site. Positions 40–44 (AITQH) are G2. The G3 stretch occupies residues 76-79 (DTPG). GTP is bound by residues 76 to 80 (DTPGH) and 130 to 133 (TKVD). A G4 region spans residues 130–133 (TKVD). Residues 198–200 (SAH) form a G5 region.

It belongs to the TRAFAC class translation factor GTPase superfamily. Classic translation factor GTPase family. IF-2 subfamily.

In terms of biological role, function in general translation initiation by promoting the binding of the formylmethionine-tRNA to ribosomes. Seems to function along with eIF-2. This is Probable translation initiation factor IF-2 from Methanoregula boonei (strain DSM 21154 / JCM 14090 / 6A8).